A 159-amino-acid polypeptide reads, in one-letter code: UPF0336 protein MAP_4107 (159 aa).

The protein belongs to the UPF0336 family.

The sequence is that of UPF0336 protein MAP_4107 from Mycolicibacterium paratuberculosis (strain ATCC BAA-968 / K-10) (Mycobacterium paratuberculosis).